The following is a 477-amino-acid chain: Tripartite motif-containing protein 72 (477 aa).

16 residues coordinate Zn(2+): Cys-14, Cys-17, Cys-29, His-31, Cys-34, Cys-37, Cys-53, Cys-56, Cys-86, His-89, Cys-97, Asp-100, Cys-105, Cys-108, His-114, and His-117. The segment at 14–57 (CPLCLQLFDAPVTAECGHSFCRACLGRVAGEPAADGTVLCPCCQ) adopts an RING-type zinc-finger fold. The B box-type zinc-finger motif lies at 81–122 (VPQGHCEEHLDPLSIYCEQDRALVCGVCASLGSHRGHRLLPA). A coiled-coil region spans residues 135 to 232 (QQKLQLQEAC…EKVLEEVADK (98 aa)). Position 144 is an S-nitrosocysteine (Cys-144). Ser-255 carries the post-translational modification Phosphoserine. The region spanning 271–475 (DFKFQVWRKM…PLLLVGPEGA (205 aa)) is the B30.2/SPRY domain.

It belongs to the TRIM/RBCC family. As to quaternary structure, homodimer. Homooligomer; disulfide-linked. Oligomerizes on the phospholipid membrane. Interacts with DYSF and CAV3. Disulfide bond formation at Cys-242 occurs in case of membrane damage that cause the entry of the oxidized milieu of the extracellular space, resulting in homooligomerization. In terms of processing, S-nitrosylation at Cys-144 stabilizes TRIM72 and protects against oxidation-induced protein degradation and cell death.

It is found in the cell membrane. It localises to the sarcolemma. The protein resides in the cytoplasmic vesicle membrane. It catalyses the reaction S-ubiquitinyl-[E2 ubiquitin-conjugating enzyme]-L-cysteine + [acceptor protein]-L-lysine = [E2 ubiquitin-conjugating enzyme]-L-cysteine + N(6)-ubiquitinyl-[acceptor protein]-L-lysine.. It participates in protein modification; protein ubiquitination. Specifically binds phosphatidylserine. The binding to phospholipids enhances ubiquitination activity. Functionally, muscle-specific E3 ubiquitin-protein ligase that plays a central role in cell membrane repair by nucleating the assembly of the repair machinery at injury sites. Its ubiquitination activity is mediated by E2 ubiquitin-conjugating enzymes UBE2D1, UBE2D2 and UBE2D3. Acts as a sensor of oxidation: upon membrane damage, entry of extracellular oxidative environment results in disulfide bond formation and homooligomerization at the injury site. This oligomerization acts as a nucleation site for recruitment of TRIM72-containing vesicles to the injury site, leading to membrane patch formation. Probably acts upstream of the Ca(2+)-dependent membrane resealing process. Required for transport of DYSF to sites of cell injury during repair patch formation. Regulates membrane budding and exocytosis. May be involved in the regulation of the mobility of KCNB1-containing endocytic vesicles. The chain is Tripartite motif-containing protein 72 from Homo sapiens (Human).